Reading from the N-terminus, the 728-residue chain is Phosphoribosylformylglycinamidine synthase subunit PurL (728 aa).

Residue His-40 is part of the active site. The ATP site is built by Tyr-43 and Lys-82. Glu-84 is a binding site for Mg(2+). Residues 85 to 88 and Arg-107 contribute to the substrate site; that span reads SHNH. The active-site Proton acceptor is the His-86. Asp-108 provides a ligand contact to Mg(2+). Gln-231 contacts substrate. Residue Asp-259 participates in Mg(2+) binding. Residue 303–305 participates in substrate binding; it reads ESQ. ATP-binding residues include Asn-483 and Gly-520. Residue Asn-521 coordinates Mg(2+). A substrate-binding site is contributed by Ser-523.

The protein belongs to the FGAMS family. In terms of assembly, monomer. Part of the FGAM synthase complex composed of 1 PurL, 1 PurQ and 2 PurS subunits.

The protein localises to the cytoplasm. It catalyses the reaction N(2)-formyl-N(1)-(5-phospho-beta-D-ribosyl)glycinamide + L-glutamine + ATP + H2O = 2-formamido-N(1)-(5-O-phospho-beta-D-ribosyl)acetamidine + L-glutamate + ADP + phosphate + H(+). Its pathway is purine metabolism; IMP biosynthesis via de novo pathway; 5-amino-1-(5-phospho-D-ribosyl)imidazole from N(2)-formyl-N(1)-(5-phospho-D-ribosyl)glycinamide: step 1/2. Functionally, part of the phosphoribosylformylglycinamidine synthase complex involved in the purines biosynthetic pathway. Catalyzes the ATP-dependent conversion of formylglycinamide ribonucleotide (FGAR) and glutamine to yield formylglycinamidine ribonucleotide (FGAM) and glutamate. The FGAM synthase complex is composed of three subunits. PurQ produces an ammonia molecule by converting glutamine to glutamate. PurL transfers the ammonia molecule to FGAR to form FGAM in an ATP-dependent manner. PurS interacts with PurQ and PurL and is thought to assist in the transfer of the ammonia molecule from PurQ to PurL. The protein is Phosphoribosylformylglycinamidine synthase subunit PurL of Carboxydothermus hydrogenoformans (strain ATCC BAA-161 / DSM 6008 / Z-2901).